The sequence spans 403 residues: Putative F-box protein At5g41500 (403 aa).

The F-box domain maps to 2–47 (ATTISNLPRELIEEILSRVPLRAMKAMRLTCKSWNNLSKSESFMKM).

The sequence is that of Putative F-box protein At5g41500 from Arabidopsis thaliana (Mouse-ear cress).